Reading from the N-terminus, the 467-residue chain is Cysteine--tRNA ligase (467 aa).

Cys-30 provides a ligand contact to Zn(2+). Positions 32–42 match the 'HIGH' region motif; it reads PTVYDDSHLGH. Cys-209, His-239, and Glu-243 together coordinate Zn(2+). Positions 271 to 275 match the 'KMSKS' region motif; sequence KMSKS. Lys-274 serves as a coordination point for ATP.

It belongs to the class-I aminoacyl-tRNA synthetase family. Monomer. Zn(2+) is required as a cofactor.

Its subcellular location is the cytoplasm. The catalysed reaction is tRNA(Cys) + L-cysteine + ATP = L-cysteinyl-tRNA(Cys) + AMP + diphosphate. The protein is Cysteine--tRNA ligase of Aliarcobacter butzleri (strain RM4018) (Arcobacter butzleri).